We begin with the raw amino-acid sequence, 371 residues long: MNKLPHETRVVIGMSGGVDSSVAALLLKEQGYDVIGIFMKNWDDTDENGVCTATEDYNDVIEVCNQIGIPYYAVNFEKQYWDKVFTYFLDEYRAGRTPNPDVMCNKEIKFKAFLEHAIALGADYVATGHYARVAYMDGEYKMLRGVDDNKDQTYFLNQLSQEQLSKTMFPLGELKKPQIREMAKEAGLATAAKKDSTGICFIGERNFKDFLSNYLPAQPGVMQTLSGEVKGKHDGLMYYTIGQRHGLGIGGNGDPWFAVGKNLKENILYVDQGFHNELLYGDEVIATNVGWVSNEAKEKEFKCTAKFRYRQEDNKVTVQIVDENTVRILCDEPIRAITPGQAVVFYDGDECLGGATIDEVYRSGKKLDCLG.

Residues 13-20 and Met-39 each bind ATP; that span reads GMSGGVDS. The segment at 99–101 is interaction with target base in tRNA; it reads NPD. Cys-104 functions as the Nucleophile in the catalytic mechanism. Cysteines 104 and 200 form a disulfide. Gly-128 provides a ligand contact to ATP. The interaction with tRNA stretch occupies residues 150–152; that stretch reads KDQ. Cys-200 acts as the Cysteine persulfide intermediate in catalysis. The segment at 308–309 is interaction with tRNA; it reads RY.

The protein belongs to the MnmA/TRMU family.

The protein localises to the cytoplasm. It carries out the reaction S-sulfanyl-L-cysteinyl-[protein] + uridine(34) in tRNA + AH2 + ATP = 2-thiouridine(34) in tRNA + L-cysteinyl-[protein] + A + AMP + diphosphate + H(+). In terms of biological role, catalyzes the 2-thiolation of uridine at the wobble position (U34) of tRNA, leading to the formation of s(2)U34. The sequence is that of tRNA-specific 2-thiouridylase MnmA from Bacillus anthracis.